A 377-amino-acid chain; its full sequence is uncharacterized protein (377 aa).

The next 7 membrane-spanning stretches (helical) occupy residues 21-41, 66-86, 163-183, 197-217, 236-256, 292-312, and 339-359; these read WLLA…LVLF, LVTF…FGLG, IGVL…GIVL, AILF…IAII, FYMG…YHIF, VNLI…FLIL, and IYFL…ELLF.

The protein localises to the cell membrane. This is an uncharacterized protein from Mycoplasma pneumoniae (strain ATCC 29342 / M129 / Subtype 1) (Mycoplasmoides pneumoniae).